We begin with the raw amino-acid sequence, 665 residues long: Macrolide export ATP-binding/permease protein MacB (665 aa).

One can recognise an ABC transporter domain in the interval 17-255 (MQVKGLIREF…VAQFSSIIDK (239 aa)). 53-60 (GQSGSGKS) contributes to the ATP binding site. Helical transmembrane passes span 287–307 (LLTMLGIIIGIASVVSVVGLG), 544–564 (IAIISLIVGGIGVMNIMLVSV), 588–608 (FLIEAVLVCILGGLLGIGMAF), and 630–650 (SIIAAFVCSTLIGVVFGFLPA).

The protein belongs to the ABC transporter superfamily. Macrolide exporter (TC 3.A.1.122) family. As to quaternary structure, homodimer. Part of the tripartite efflux system MacAB-TolC, which is composed of an inner membrane transporter, MacB, a periplasmic membrane fusion protein, MacA, and an outer membrane component, TolC. The complex forms a large protein conduit and can translocate molecules across both the inner and outer membranes. Interacts with MacA.

The protein resides in the cell inner membrane. In terms of biological role, part of the tripartite efflux system MacAB-TolC. MacB is a non-canonical ABC transporter that contains transmembrane domains (TMD), which form a pore in the inner membrane, and an ATP-binding domain (NBD), which is responsible for energy generation. Confers resistance against macrolides. The polypeptide is Macrolide export ATP-binding/permease protein MacB (Psychrobacter arcticus (strain DSM 17307 / VKM B-2377 / 273-4)).